The following is a 296-amino-acid chain: Nitrogenase iron protein 1 (296 aa).

11-18 (GKGGIGKS) provides a ligand contact to ATP. Residue C99 coordinates [4Fe-4S] cluster. R102 is modified (ADP-ribosylarginine; by dinitrogenase reductase ADP-ribosyltransferase). C133 provides a ligand contact to [4Fe-4S] cluster.

It belongs to the NifH/BchL/ChlL family. Homodimer. It depends on [4Fe-4S] cluster as a cofactor. The reversible ADP-ribosylation of Arg-102 inactivates the nitrogenase reductase and regulates nitrogenase activity.

The enzyme catalyses N2 + 8 reduced [2Fe-2S]-[ferredoxin] + 16 ATP + 16 H2O = H2 + 8 oxidized [2Fe-2S]-[ferredoxin] + 2 NH4(+) + 16 ADP + 16 phosphate + 6 H(+). Functionally, the key enzymatic reactions in nitrogen fixation are catalyzed by the nitrogenase complex, which has 2 components: the iron protein and the molybdenum-iron protein. The chain is Nitrogenase iron protein 1 (nifH1) from Azorhizobium caulinodans (strain ATCC 43989 / DSM 5975 / JCM 20966 / LMG 6465 / NBRC 14845 / NCIMB 13405 / ORS 571).